The following is a 1356-amino-acid chain: Partitioning defective 3 homolog (1356 aa).

Ser25 is modified (phosphoserine). Disordered regions lie at residues 81–100 and 154–262; these read EQDP…GTQS and SVSD…GLEH. Position 91 is a phosphothreonine (Thr91). The span at 91-100 shows a compositional bias: low complexity; sequence TSASSTGTQS. Polar residues-rich tracts occupy residues 154 to 163 and 171 to 187; these read SVSDSNFSSE and TRWS…TAGS. Ser156 and Ser174 each carry phosphoserine. Residues 190-203 show a composition bias toward basic and acidic residues; sequence TCDRKKDENYRSLP. Positions 204 to 224 are enriched in polar residues; that stretch reads RDTSNWSNQFQRDNARSSLSA. The span at 246–260 shows a compositional bias: basic and acidic residues; the sequence is DNSRVEPVGHADTGL. One can recognise a PDZ 1 domain in the interval 271-359; it reads MVKLVEVPND…TPIIWFHVVP (89 aa). Ser383 bears the Phosphoserine mark. The disordered stretch occupies residues 408–448; it reads LNHPPEQIDSHSRLPHSAHPSGKPPSAPASAPQNVFSTTVS. PDZ domains are found at residues 461 to 546 and 590 to 677; these read NIQL…LVFR and EVPL…GMIQ. The residue at position 489 (Tyr489) is a Phosphotyrosine. Phosphoserine occurs at positions 692, 695, 715, 728, 792, 809, and 827. Positions 712 to 936 are interaction with PRKCI and PRKCZ; that stretch reads RRISHSLYSG…AAIDKSYDKP (225 aa). Lys834 is subject to N6-acetyllysine. Ser837 bears the Phosphoserine mark. Residue Lys851 is modified to N6-acetyllysine. Phosphoserine occurs at positions 852 and 873. Disordered stretches follow at residues 865-886 and 932-1025; these read TVDD…GLKK and SYDK…DMFR. N6-acetyllysine is present on Lys885. The segment at 935-1356 is interaction with FRMD4A; it reads KPAVDDDDEG…TPEKGRPFYS (422 aa). Acidic residues predominate over residues 939–953; the sequence is DDDDEGMETLEEDTE. Ser962 carries the post-translational modification Phosphoserine; by AURKA. The span at 968-982 shows a compositional bias: polar residues; that stretch reads DQPSHSLERQMNGNQ. A phosphoserine mark is found at Ser971 and Ser973. Basic and acidic residues predominate over residues 983–1009; sequence EKGDKTDRKKDKTGKEKKKDRDKEKDK. Ser1046 is modified (phosphoserine). Positions 1049-1077 form a coiled coil; it reads SEEERIRMKQEQERIQAKTREFRERQARE. A disordered region spans residues 1129–1356; that stretch reads QVKKPRNSKP…TPEKGRPFYS (228 aa). The span at 1136–1149 shows a compositional bias: polar residues; it reads SKPSPVDSNRSTPS. Residues 1150 to 1177 show a composition bias toward basic and acidic residues; sequence NHDRIQRLRQEFQQAKQDEDVEDRRRTY. Coiled-coil stretches lie at residues 1151–1174, 1201–1224, and 1280–1301; these read HDRI…EDRR, VQMQ…YSSL, and MLET…MKKQ. Residues 1196–1205 are compositionally biased toward low complexity; the sequence is SVSVEVQMQR. Residues 1221-1245 show a composition bias toward polar residues; it reads YSSLPRQSRKNASSVSQDSWEQNYS. Over residues 1285–1298 the composition is skewed to basic and acidic residues; it reads ELLRQEQRRKEQQM. Residues 1337–1346 show a composition bias toward polar residues; the sequence is SQVARLNRLQ. Positions 1347-1356 are enriched in basic and acidic residues; that stretch reads TPEKGRPFYS. Lys1350 is subject to N6-acetyllysine.

Belongs to the PAR3 family. Interacts (via PDZ 1 domain) with F11R/JAM1, PARD6A and PARD6B. Interacts with PRCKI and CDH5. Interacts (via PDZ 3 domain) with PTEN (via C-terminus). Part of a complex with PARD6A or PARD6B, PRKCI or PRKCZ and CDC42 or RAC1. Component of a complex whose core is composed of ARHGAP17, AMOT, PALS1, PATJ and PARD3/PAR3. Interacts with LIMK2, AURKA and AURKB. Component of the Par polarity complex, composed of at least phosphorylated PRKCZ, PARD3 and TIAM1. Directly interacts with TIAM1 and TIAM2. Interacts with ECT2, FBF1 and SIRT2. Interacts (via coiled-coil domain) with FRMD4A. Found in a complex with PARD3, CYTH1 and FRMD4A. Interacts with SAPCD2. Interacts with PRKCA. As to quaternary structure, interacts with PRKCZ. In terms of processing, acetylated. Deacetylated by SIRT2, thereby inhibiting Schwann cell peripheral myelination. Phosphorylation at Ser-827 by PRKCZ and PRKCI occurs at the most apical tip of epithelial cell-cell contacts during the initial phase of tight junction formation and may promote dissociation of the complex with PARD6. EGF-induced Tyr-1127 phosphorylation mediates dissociation from LIMK2. Phosphorylation by AURKA at Ser-962 is required for the normal establishment of neuronal polarity. In terms of tissue distribution, widely expressed.

The protein resides in the cytoplasm. The protein localises to the endomembrane system. Its subcellular location is the cell junction. It localises to the tight junction. It is found in the adherens junction. The protein resides in the cell membrane. The protein localises to the cell cortex. Its subcellular location is the cytoskeleton. Its function is as follows. Adapter protein involved in asymmetrical cell division and cell polarization processes. Seems to play a central role in the formation of epithelial tight junctions. Targets the phosphatase PTEN to cell junctions. Involved in Schwann cell peripheral myelination. Association with PARD6B may prevent the interaction of PARD3 with F11R/JAM1, thereby preventing tight junction assembly. The PARD6-PARD3 complex links GTP-bound Rho small GTPases to atypical protein kinase C proteins. Required for establishment of neuronal polarity and normal axon formation in cultured hippocampal neurons. The chain is Partitioning defective 3 homolog from Homo sapiens (Human).